A 464-amino-acid polypeptide reads, in one-letter code: GTPase Der (464 aa).

EngA-type G domains lie at Ala-3–Glu-166 and Leu-177–Asn-350. GTP contacts are provided by residues Gly-9–Ser-16, Asp-56–Val-60, Asn-118–Glu-121, Gly-183–Ser-190, Asp-230–Ile-234, and Asn-295–Asp-298. In terms of domain architecture, KH-like spans Ser-351–Lys-435.

This sequence belongs to the TRAFAC class TrmE-Era-EngA-EngB-Septin-like GTPase superfamily. EngA (Der) GTPase family. Associates with the 50S ribosomal subunit.

Functionally, GTPase that plays an essential role in the late steps of ribosome biogenesis. The sequence is that of GTPase Der from Nitrosococcus oceani (strain ATCC 19707 / BCRC 17464 / JCM 30415 / NCIMB 11848 / C-107).